The sequence spans 310 residues: Melanocyte-stimulating hormone receptor (310 aa).

Topologically, residues 1-37 (MPMQGAQRKLLGSLNSTPTATSNLGLAANRTGAPCLE) are extracellular. The N-linked (GlcNAc...) asparagine glycan is linked to Asn29. Residues 38–63 (LPIPDGLFLSLGLVSLVENVLVVAAI) form a helical membrane-spanning segment. Residues 64–72 (AKNRNLHSS) are Cytoplasmic-facing. Residues 73 to 93 (MYCFICCLALSDLLVSGSNML) form a helical membrane-spanning segment. The Extracellular segment spans residues 94-110 (EAGVLATRASVVQQLHN). Residues 111 to 132 (TIDVLTCSSMLCSLCFLGAIAV) traverse the membrane as a helical segment. At 133–155 (DRYISIFYALRYHSIMTLPRAQR) the chain is on the cytoplasmic side. A helical transmembrane segment spans residues 156 to 175 (AVAAIWVASVLSSTLFITYY). Residues 176 to 183 (DHAAVLLC) lie on the Extracellular side of the membrane. The chain crosses the membrane as a helical span at residues 184–203 (LVVFFLAMLVLMAVLYVHML). Residues 204 to 232 (AWACQHAQGIIRLHKRQPPAHKGFGLRGA) lie on the Cytoplasmic side of the membrane. Residues 233-258 (ATLTILLGIFFLCWGPFFLRLTLVVF) traverse the membrane as a helical segment. At 259 to 271 (CPQHLTCNCIFKN) the chain is on the extracellular side. Residues 272-292 (FKVFLTLIICNTIIDPLIYAF) form a helical membrane-spanning segment. Over 293-310 (RSQELRRTLKEVLGRGRW) the chain is Cytoplasmic.

This sequence belongs to the G-protein coupled receptor 1 family. In terms of assembly, interacts with MGRN1, but does not undergo MGRN1-mediated ubiquitination; this interaction competes with GNAS-binding and thus inhibits agonist-induced cAMP production. Interacts with OPN3; the interaction results in a decrease in MC1R-mediated cAMP signaling and ultimately a decrease in melanin production in melanocytes.

The protein resides in the cell membrane. Receptor for MSH (alpha, beta and gamma) and ACTH. The activity of this receptor is mediated by G proteins which activate adenylate cyclase. Mediates melanogenesis, the production of eumelanin (black/brown) and phaeomelanin (red/yellow), via regulation of cAMP signaling in melanocytes. In Leontopithecus chrysomelas (Golden-headed lion tamarin), this protein is Melanocyte-stimulating hormone receptor (MC1R).